The primary structure comprises 747 residues: Protein O-mannosyl-transferase 1 (747 aa).

The next 9 membrane-spanning stretches (helical) occupy residues 8–28 (PVVV…MGLL), 40–60 (VVFD…QIFF), 68–88 (FGHM…NFLW), 99–119 (VPVW…VPMA), 122–142 (IVLE…LMLI), 154–174 (LLES…LKFF), 183–203 (SLSW…AVGI), 206–226 (MGVF…WHLL), and 269–289 (LLVI…ILVF). 3 consecutive MIR domains span residues 318–381 (PLEV…VKDP), 392–449 (PRPV…LEIV), and 453–513 (SDTD…VEEH). N-linked (GlcNAc...) asparagine glycosylation is found at asparagine 435, asparagine 471, and asparagine 539. 3 helical membrane-spanning segments follow: residues 597–617 (IVIW…SLWY), 636–656 (WVLA…PFFL), and 661–681 (LFLY…PVVL).

Belongs to the glycosyltransferase 39 family. As to quaternary structure, interacts with POMT2. In terms of tissue distribution, widely expressed. Highly expressed in testis, heart and pancreas. Detected at lower levels in kidney, skeletal muscle, brain, placenta, lung and liver.

The protein resides in the endoplasmic reticulum membrane. It carries out the reaction a di-trans,poly-cis-dolichyl beta-D-mannosyl phosphate + L-seryl-[protein] = 3-O-(alpha-D-mannosyl)-L-seryl-[protein] + a di-trans,poly-cis-dolichyl phosphate + H(+). The enzyme catalyses a di-trans,poly-cis-dolichyl beta-D-mannosyl phosphate + L-threonyl-[protein] = 3-O-(alpha-D-mannosyl)-L-threonyl-[protein] + a di-trans,poly-cis-dolichyl phosphate + H(+). It participates in protein modification; protein glycosylation. Its activity is regulated as follows. Slightly activated by Mg(2+) and inhibited by both Ca(+) and Mn(2+). EDTA ha no effect on activity in vitro. Functionally, transfers mannosyl residues to the hydroxyl group of serine or threonine residues. Coexpression of both POMT1 and POMT2 is necessary for enzyme activity, expression of either POMT1 or POMT2 alone is insufficient. Essentially dedicated to O-mannosylation of alpha-DAG1 and few other proteins but not of cadherins and protocaherins. The polypeptide is Protein O-mannosyl-transferase 1 (POMT1) (Homo sapiens (Human)).